The chain runs to 450 residues: tRNA-2-methylthio-N(6)-dimethylallyladenosine synthase (450 aa).

The 121-residue stretch at lysine 7–glycine 127 folds into the MTTase N-terminal domain. Residues cysteine 16, cysteine 52, cysteine 90, cysteine 168, cysteine 172, and cysteine 175 each contribute to the [4Fe-4S] cluster site. The Radical SAM core domain maps to isoleucine 154–glycine 388. Positions serine 389–alanine 450 constitute a TRAM domain.

The protein belongs to the methylthiotransferase family. MiaB subfamily. Monomer. [4Fe-4S] cluster serves as cofactor.

It localises to the cytoplasm. The enzyme catalyses N(6)-dimethylallyladenosine(37) in tRNA + (sulfur carrier)-SH + AH2 + 2 S-adenosyl-L-methionine = 2-methylsulfanyl-N(6)-dimethylallyladenosine(37) in tRNA + (sulfur carrier)-H + 5'-deoxyadenosine + L-methionine + A + S-adenosyl-L-homocysteine + 2 H(+). Its function is as follows. Catalyzes the methylthiolation of N6-(dimethylallyl)adenosine (i(6)A), leading to the formation of 2-methylthio-N6-(dimethylallyl)adenosine (ms(2)i(6)A) at position 37 in tRNAs that read codons beginning with uridine. The chain is tRNA-2-methylthio-N(6)-dimethylallyladenosine synthase from Mesorhizobium japonicum (strain LMG 29417 / CECT 9101 / MAFF 303099) (Mesorhizobium loti (strain MAFF 303099)).